We begin with the raw amino-acid sequence, 115 residues long: MPKANNAVAAKARRKRVLKKAKGYWGSRGNVLTVVKHAVDKAEQYAYRDRRAKKRTFRALWIMRINAAARLNGTTYSRLVDAMNKKSVEIDRKAMAEIAVKDPEAFTTLVKAIID.

The protein belongs to the bacterial ribosomal protein bL20 family.

Its function is as follows. Binds directly to 23S ribosomal RNA and is necessary for the in vitro assembly process of the 50S ribosomal subunit. It is not involved in the protein synthesizing functions of that subunit. This chain is Large ribosomal subunit protein bL20, found in Chlorobium phaeovibrioides (strain DSM 265 / 1930) (Prosthecochloris vibrioformis (strain DSM 265)).